The sequence spans 418 residues: Serine--tRNA ligase (418 aa).

231–233 contacts L-serine; that stretch reads TAE. Residue 262-264 participates in ATP binding; it reads RSE. Glu-285 contributes to the L-serine binding site. ATP is bound at residue 349–352; sequence EISS. Ser-385 contributes to the L-serine binding site.

This sequence belongs to the class-II aminoacyl-tRNA synthetase family. Type-1 seryl-tRNA synthetase subfamily. As to quaternary structure, homodimer. The tRNA molecule binds across the dimer.

It is found in the cytoplasm. The catalysed reaction is tRNA(Ser) + L-serine + ATP = L-seryl-tRNA(Ser) + AMP + diphosphate + H(+). The enzyme catalyses tRNA(Sec) + L-serine + ATP = L-seryl-tRNA(Sec) + AMP + diphosphate + H(+). It functions in the pathway aminoacyl-tRNA biosynthesis; selenocysteinyl-tRNA(Sec) biosynthesis; L-seryl-tRNA(Sec) from L-serine and tRNA(Sec): step 1/1. In terms of biological role, catalyzes the attachment of serine to tRNA(Ser). Is also able to aminoacylate tRNA(Sec) with serine, to form the misacylated tRNA L-seryl-tRNA(Sec), which will be further converted into selenocysteinyl-tRNA(Sec). This Ureaplasma parvum serovar 3 (strain ATCC 27815 / 27 / NCTC 11736) protein is Serine--tRNA ligase.